The chain runs to 310 residues: Methionyl-tRNA formyltransferase (310 aa).

Residue 109 to 112 (SLLP) coordinates (6S)-5,6,7,8-tetrahydrofolate.

Belongs to the Fmt family.

The catalysed reaction is L-methionyl-tRNA(fMet) + (6R)-10-formyltetrahydrofolate = N-formyl-L-methionyl-tRNA(fMet) + (6S)-5,6,7,8-tetrahydrofolate + H(+). In terms of biological role, attaches a formyl group to the free amino group of methionyl-tRNA(fMet). The formyl group appears to play a dual role in the initiator identity of N-formylmethionyl-tRNA by promoting its recognition by IF2 and preventing the misappropriation of this tRNA by the elongation apparatus. In Agathobacter rectalis (strain ATCC 33656 / DSM 3377 / JCM 17463 / KCTC 5835 / VPI 0990) (Eubacterium rectale), this protein is Methionyl-tRNA formyltransferase.